The sequence spans 401 residues: MFDKQEFVSKLVTEEKAKIVLLVMDGLGDIPVNGKTPLQAANTPNLDNLAKESDLGQTIPVLPGITPGSGPGHLSLFGYDPIKYQIGRGILEALGIGVEVGEKDVVARANFATWDGKVVLDRRAGRPATEESAKVVQLLSEKIKKIEDVEITFYPGKEHRFVVKFTGEGLGDKVTDADPQKEGHPMAWAEGLDEPSKKTARIVNELIKKIAEVLKDNSKINFALIRGFSKYPDLPKFPQVYKMKAGAIATYPMYRGLAKLVGMEIIETGQTVADEIKTLKEKWNDYDFFYVHVKKTDSYGEDGKFEEKVKVIEEVDAIIPEIVSLNPDVLVITGDHSTPVPLKAHSWHPVPLLIWSKYTRRGLSQAFNEFECARGTLGTIHASDVMTLALAYAGRLEKFGA.

Belongs to the BPG-independent phosphoglycerate mutase family. A-PGAM subfamily.

It carries out the reaction (2R)-2-phosphoglycerate = (2R)-3-phosphoglycerate. The protein operates within carbohydrate degradation; glycolysis; pyruvate from D-glyceraldehyde 3-phosphate: step 3/5. Catalyzes the interconversion of 2-phosphoglycerate and 3-phosphoglycerate. In Thermotoga sp. (strain RQ2), this protein is Probable 2,3-bisphosphoglycerate-independent phosphoglycerate mutase.